The sequence spans 367 residues: Apolipoprotein A-V (367 aa).

Residues 1–20 (MAAVITWALALLSVFATVQA) form the signal peptide. Serine 52 carries the phosphoserine modification. A coiled-coil region spans residues 231–255 (TRKAKDLHTSIQRNLDQLRDELSTF). A disordered region spans residues 305–332 (EEIQHQLAPPPPSHSAFAPELGHSDSNK).

The protein belongs to the apolipoprotein A1/A4/E family. As to quaternary structure, interacts with GPIHBP1. Interacts with SORL1; this interaction leads to APOA5 internalization and sorting either to lysosomes and degradation, or to the trans-Golgi network. In terms of processing, phosphorylated by FAM20C in the extracellular medium. In terms of tissue distribution, liver.

The protein resides in the secreted. It localises to the early endosome. It is found in the late endosome. Its subcellular location is the golgi apparatus. The protein localises to the trans-Golgi network. Minor apolipoprotein mainly associated with HDL and to a lesser extent with VLDL. May also be associated with chylomicrons. Important determinant of plasma triglyceride (TG) levels by both being a potent stimulator of apo-CII lipoprotein lipase (LPL) TG hydrolysis and an inhibitor of the hepatic VLDL-TG production rate (without affecting the VLDL-apoB production rate). Activates poorly lecithin:cholesterol acyltransferase (LCAT) and does not enhance efflux of cholesterol from macrophages. Binds heparin. This chain is Apolipoprotein A-V (Apoa5), found in Rattus norvegicus (Rat).